The sequence spans 352 residues: Thiamine-monophosphate kinase (352 aa).

Mg(2+)-binding residues include aspartate 58, threonine 73, and aspartate 75. A substrate-binding site is contributed by histidine 82. Residues aspartate 103 and aspartate 151 each contribute to the Mg(2+) site. Residues 150–151 and arginine 177 contribute to the ATP site; that span reads GD. Aspartate 239 contributes to the Mg(2+) binding site. Serine 241 provides a ligand contact to ATP. Residue aspartate 242 coordinates Mg(2+). Positions 294 and 349 each coordinate substrate.

Belongs to the thiamine-monophosphate kinase family.

It catalyses the reaction thiamine phosphate + ATP = thiamine diphosphate + ADP. The protein operates within cofactor biosynthesis; thiamine diphosphate biosynthesis; thiamine diphosphate from thiamine phosphate: step 1/1. In terms of biological role, catalyzes the ATP-dependent phosphorylation of thiamine-monophosphate (TMP) to form thiamine-pyrophosphate (TPP), the active form of vitamin B1. This chain is Thiamine-monophosphate kinase, found in Caulobacter vibrioides (strain ATCC 19089 / CIP 103742 / CB 15) (Caulobacter crescentus).